Reading from the N-terminus, the 918-residue chain is DNA mismatch repair protein MutS (918 aa).

Gly662–Ser669 is an ATP binding site.

The protein belongs to the DNA mismatch repair MutS family.

Its function is as follows. This protein is involved in the repair of mismatches in DNA. It is possible that it carries out the mismatch recognition step. This protein has a weak ATPase activity. This Sorangium cellulosum (strain So ce56) (Polyangium cellulosum (strain So ce56)) protein is DNA mismatch repair protein MutS.